The sequence spans 700 residues: Constitutive coactivator of peroxisome proliferator-activated receptor gamma (700 aa).

It belongs to the constitutive coactivator of PPAR-gamma family. Interacts with ESR1 and RXRA. Interacts with PPARG; in a ligand-independent manner.

It localises to the nucleus. Functions as a transactivator of PPARG and ESR1. Functions in adipogenesis through PPARG activation. In Bos taurus (Bovine), this protein is Constitutive coactivator of peroxisome proliferator-activated receptor gamma (FAM120B).